Consider the following 430-residue polypeptide: Dihydroorotase (430 aa).

Residues His57 and His59 each coordinate Zn(2+). Substrate-binding positions include 59-61 (HLR) and Asn91. 3 residues coordinate Zn(2+): Asp151, His178, and His231. Asn277 is a binding site for substrate. Residue Asp304 coordinates Zn(2+). The active site involves Asp304. Substrate-binding positions include His308 and 322 to 323 (PG).

This sequence belongs to the metallo-dependent hydrolases superfamily. DHOase family. Class I DHOase subfamily. The cofactor is Zn(2+).

It catalyses the reaction (S)-dihydroorotate + H2O = N-carbamoyl-L-aspartate + H(+). Its pathway is pyrimidine metabolism; UMP biosynthesis via de novo pathway; (S)-dihydroorotate from bicarbonate: step 3/3. Functionally, catalyzes the reversible cyclization of carbamoyl aspartate to dihydroorotate. This Mycobacterium bovis (strain ATCC BAA-935 / AF2122/97) protein is Dihydroorotase.